The chain runs to 139 residues: MSRILAIDYGKKRTGVAVTDVLQIIANGLTTVPTHQLLDFILKYVEKEPVERIIVGHPKQMNNQESENMRNIVPFVNQLRKKIPDIPVEFVDERFTSVLAHQAMLDGGLKKKDRQNKALVDEISATIILQSYLESKKYI.

The protein belongs to the YqgF nuclease family.

Its subcellular location is the cytoplasm. Could be a nuclease involved in processing of the 5'-end of pre-16S rRNA. This is Putative pre-16S rRNA nuclease from Phocaeicola vulgatus (strain ATCC 8482 / DSM 1447 / JCM 5826 / CCUG 4940 / NBRC 14291 / NCTC 11154) (Bacteroides vulgatus).